The chain runs to 207 residues: DNA-directed RNA polymerase subunit alpha (207 aa).

This sequence belongs to the RNA polymerase alpha chain family. In plastids the minimal PEP RNA polymerase catalytic core is composed of four subunits: alpha, beta, beta', and beta''. When a (nuclear-encoded) sigma factor is associated with the core the holoenzyme is formed, which can initiate transcription.

It is found in the plastid. Its subcellular location is the chloroplast. The catalysed reaction is RNA(n) + a ribonucleoside 5'-triphosphate = RNA(n+1) + diphosphate. In terms of biological role, DNA-dependent RNA polymerase catalyzes the transcription of DNA into RNA using the four ribonucleoside triphosphates as substrates. This chain is DNA-directed RNA polymerase subunit alpha (rpoA), found in Euglena anabaena (Euglenaria anabaena).